The following is a 373-amino-acid chain: tRNA-specific 2-thiouridylase MnmA (373 aa).

Residues Gly12–Ser19 and Met38 contribute to the ATP site. The tract at residues Asn98 to Asp100 is interaction with target base in tRNA. Cys103 (nucleophile) is an active-site residue. A disulfide bridge links Cys103 with Cys200. Gly127 is an ATP binding site. The interval Lys150–Gln152 is interaction with tRNA. Catalysis depends on Cys200, which acts as the Cysteine persulfide intermediate. The segment at Arg312–Tyr313 is interaction with tRNA.

The protein belongs to the MnmA/TRMU family.

It localises to the cytoplasm. The catalysed reaction is S-sulfanyl-L-cysteinyl-[protein] + uridine(34) in tRNA + AH2 + ATP = 2-thiouridine(34) in tRNA + L-cysteinyl-[protein] + A + AMP + diphosphate + H(+). Catalyzes the 2-thiolation of uridine at the wobble position (U34) of tRNA, leading to the formation of s(2)U34. The sequence is that of tRNA-specific 2-thiouridylase MnmA from Streptococcus pyogenes serotype M12 (strain MGAS2096).